The sequence spans 952 residues: Bifunctional ent-kaurene synthase (952 aa).

The DXDD B-type cyclization motif motif lies at 328–331 (DVDD). Mg(2+) contacts are provided by D668, E672, N848, D849, S852, and D856. The short motif at 668–672 (DEYME) is the DEXXE A-type cyclization motif element.

It belongs to the terpene synthase family. Mg(2+) serves as cofactor.

The catalysed reaction is ent-copalyl diphosphate = ent-kaur-16-ene + diphosphate. It catalyses the reaction (2E,6E,10E)-geranylgeranyl diphosphate = ent-copalyl diphosphate. Its pathway is plant hormone biosynthesis; gibberellin biosynthesis. Functionally, bifunctional ent-kaurene synthase; part of the gene cluster that mediates the biosynthesis of gibberellins (GAs), diterpenoids that may provide a selective advantage during infection of the preferred host plant, rice. Gibberellins (GAs) are diterpenoids and are synthesized via the mevalonate pathway. Biosynthesis of the major metabolite GA3 (gibberellic acid) from geranylgeranyl diphosphate (GGPP) requires 13 steps. The GGPP produced by the geranylgeranyl diphosphate synthase GGS2 is converted to ent-kaurene via ent-copalyldiphosphate in a two-step cyclization reaction performed by the bifunctional ent-copalyl diphosphate synthase/ent-kaurene synthase enzyme (CPS/KS). Ent-Kaurene is metabolized to GAs by a series of oxidation reactions catalyzed by cytochrome P450 monooxygenases. Cytochrome P450 monooxygenase P450-4 is an ent-kaurene oxidase that catalyzes the three oxidation steps between ent-kaurene and ent-kaurenoic acid. The highly multifunctional cytochrome P450 monooxygenase P450-1 then catalyzes four steps involving oxidation at two carbon atoms, in the main pathway from ent-kaurenoic acid to GA14 via GA12-aldehyde as well as producing kaurenolides and fujenoic acids as by-products. The cytochrome P450 monooxygenase P450-2 then converts GA14 to GA4 by removal of C-20. GA4 is further converted to GA7 by the GA4 desaturase DES via 1,2-desaturation before cytochrome P450 monooxygenase P450-3, a 13-hydroxylase, hydroxylates GA7 to GA3, the final product of the GA-biosynthetic pathway. The chain is Bifunctional ent-kaurene synthase from Gibberella fujikuroi (strain CBS 195.34 / IMI 58289 / NRRL A-6831) (Bakanae and foot rot disease fungus).